Consider the following 451-residue polypeptide: Phosphoglucosamine mutase (451 aa).

Ser-102 serves as the catalytic Phosphoserine intermediate. Residues Ser-102, Asp-243, Asp-245, and Asp-247 each coordinate Mg(2+). Ser-102 is subject to Phosphoserine.

This sequence belongs to the phosphohexose mutase family. The cofactor is Mg(2+). Post-translationally, activated by phosphorylation.

The catalysed reaction is alpha-D-glucosamine 1-phosphate = D-glucosamine 6-phosphate. Catalyzes the conversion of glucosamine-6-phosphate to glucosamine-1-phosphate. This is Phosphoglucosamine mutase from Sinorhizobium medicae (strain WSM419) (Ensifer medicae).